Here is a 153-residue protein sequence, read N- to C-terminus: 6,7-dimethyl-8-ribityllumazine synthase (153 aa).

Residues F23, A57–E59, and A81–I83 each bind 5-amino-6-(D-ribitylamino)uracil. Residue A86–T87 participates in (2S)-2-hydroxy-3-oxobutyl phosphate binding. H89 acts as the Proton donor in catalysis. F113 is a 5-amino-6-(D-ribitylamino)uracil binding site. Position 127 (R127) interacts with (2S)-2-hydroxy-3-oxobutyl phosphate.

Belongs to the DMRL synthase family.

The enzyme catalyses (2S)-2-hydroxy-3-oxobutyl phosphate + 5-amino-6-(D-ribitylamino)uracil = 6,7-dimethyl-8-(1-D-ribityl)lumazine + phosphate + 2 H2O + H(+). The protein operates within cofactor biosynthesis; riboflavin biosynthesis; riboflavin from 2-hydroxy-3-oxobutyl phosphate and 5-amino-6-(D-ribitylamino)uracil: step 1/2. Functionally, catalyzes the formation of 6,7-dimethyl-8-ribityllumazine by condensation of 5-amino-6-(D-ribitylamino)uracil with 3,4-dihydroxy-2-butanone 4-phosphate. This is the penultimate step in the biosynthesis of riboflavin. The chain is 6,7-dimethyl-8-ribityllumazine synthase from Leptospira borgpetersenii serovar Hardjo-bovis (strain JB197).